The chain runs to 585 residues: Regulator of gene activity (585 aa).

The segment covering 42 to 56 has biased composition (polar residues); the sequence is FQTDFANSYPGTANY. 3 disordered regions span residues 42–93, 148–191, and 349–394; these read FQTD…GNRN, GGGG…PGSK, and GVGG…KVTN. The span at 58–71 shows a compositional bias: low complexity; sequence QAPQQQQQQQQQPQ. Positions 166 to 184 are enriched in polar residues; sequence PSLTNARGQNDQTLPQSNP. Over residues 349 to 367 the composition is skewed to gly residues; that stretch reads GVGGGLGSGSGSSGSGAGG. Over residues 372 to 388 the composition is skewed to polar residues; that stretch reads DNSSNDKLVKSGVQTSP.

The protein belongs to the CNOT2/3/5 family. Component of the CCR4-NOT complex composed of at least Pop2/Caf1-55, Ccr4, Not1, Rga/Not2, and Not3. As to expression, expressed in heterogeneous levels between adjacent germline stem cells (at protein level).

The protein localises to the cytoplasm. Component of the CCR4-NOT complex which is one of the major cellular mRNA deadenylases and is linked to various cellular processes including bulk mRNA degradation, miRNA-mediated repression, translational repression during translational initiation and general transcription regulation. Additional complex functions may be a consequence of its influence on mRNA expression. Essential for viability. Acts as a suppressor of position effect variegation (PEV) at the white locus and regulates the expression of several unrelated genes. Plays a role in germline stem cell differentiation in the ovaries. The chain is Regulator of gene activity from Drosophila melanogaster (Fruit fly).